The primary structure comprises 33 residues: Photosystem II reaction center protein Psb30 (33 aa).

Residues 8–28 (QLGSLLLITVAGPLIVFFLFI) traverse the membrane as a helical segment.

The protein belongs to the Psb30/Ycf12 family. In terms of assembly, PSII is composed of 1 copy each of membrane proteins PsbA, PsbB, PsbC, PsbD, PsbE, PsbF, PsbH, PsbI, PsbJ, PsbK, PsbL, PsbM, PsbT, PsbY, PsbZ, Psb30/Ycf12, peripheral proteins of the oxygen-evolving complex and a large number of cofactors. It forms dimeric complexes.

The protein resides in the plastid. It is found in the chloroplast thylakoid membrane. A core subunit of photosystem II (PSII), probably helps stabilize the reaction center. The sequence is that of Photosystem II reaction center protein Psb30 from Euglena anabaena (Euglenaria anabaena).